The primary structure comprises 659 residues: Crossover junction endonuclease MUS81 (659 aa).

A Helix-hairpin-helix motif 1 motif is present at residues 59 to 78; sequence KDLSQIKGFGKWMVKLMKGY. The region spanning 404-503 is the ERCC4 domain; the sequence is ILILDDREKF…KKLIYILEGD (100 aa). The Helix-hairpin-helix motif 2 motif lies at 585-622; the sequence is TISDVFAIQLMQVPQVTEEIAIAVLDMYPTLLSLASAY.

This sequence belongs to the XPF family. Forms a heterodimer with EME1A or EME1B. Mg(2+) serves as cofactor. Ca(2+) is required as a cofactor. In terms of tissue distribution, ubiquitous but preferentially expressed in young flowers buds, notably in anthers.

It is found in the nucleus. It localises to the nucleolus. Its function is as follows. Interacts with EME1 to form a DNA structure-specific endonuclease with substrate preference for branched DNA structures with a 5'-end at the branch nick. Typical substrates include 3'-flap structures, D-loops, replication forks, nicked Holliday junctions and also intact Holliday junctions with a reduced efficiency. May be required in mitosis for the processing of stalled or collapsed replication fork intermediates. Plays a role in DNA repair and in genotoxic stress-induced homologous recombination (HR) in somatic cells. Mediates a subset of meiotic recombination events that are insensitive to crossover interference. Together with SEND1, essential for the resolution of toxic replication structures to ensure genome stability, and to maintain telomere integrity and replication. This Arabidopsis thaliana (Mouse-ear cress) protein is Crossover junction endonuclease MUS81.